The chain runs to 251 residues: DNA repair protein RecO (251 aa).

This sequence belongs to the RecO family.

In terms of biological role, involved in DNA repair and RecF pathway recombination. The chain is DNA repair protein RecO from Streptococcus mutans serotype c (strain ATCC 700610 / UA159).